Reading from the N-terminus, the 125-residue chain is uncharacterized protein (125 aa).

In terms of domain architecture, PRD spans 15–121 (QINQSIIDVI…HSLVLEQKQL (107 aa)).

This is an uncharacterized protein from Haemophilus influenzae (strain ATCC 51907 / DSM 11121 / KW20 / Rd).